The chain runs to 474 residues: Methylenetetrahydrofolate--tRNA-(uracil-5-)-methyltransferase TrmFO (474 aa).

Position 9-14 (9-14) interacts with FAD; the sequence is GGGLAG. The disordered stretch occupies residues 425 to 451; that stretch reads PPLERMPRNETGKRLRGPEKAALKKRA. Positions 429–451 are enriched in basic and acidic residues; it reads RMPRNETGKRLRGPEKAALKKRA.

Belongs to the MnmG family. TrmFO subfamily. FAD is required as a cofactor.

It is found in the cytoplasm. The enzyme catalyses uridine(54) in tRNA + (6R)-5,10-methylene-5,6,7,8-tetrahydrofolate + NADH + H(+) = 5-methyluridine(54) in tRNA + (6S)-5,6,7,8-tetrahydrofolate + NAD(+). It catalyses the reaction uridine(54) in tRNA + (6R)-5,10-methylene-5,6,7,8-tetrahydrofolate + NADPH + H(+) = 5-methyluridine(54) in tRNA + (6S)-5,6,7,8-tetrahydrofolate + NADP(+). Functionally, catalyzes the folate-dependent formation of 5-methyl-uridine at position 54 (M-5-U54) in all tRNAs. The protein is Methylenetetrahydrofolate--tRNA-(uracil-5-)-methyltransferase TrmFO of Methylorubrum populi (strain ATCC BAA-705 / NCIMB 13946 / BJ001) (Methylobacterium populi).